We begin with the raw amino-acid sequence, 100 residues long: Aspartyl/glutamyl-tRNA(Asn/Gln) amidotransferase subunit C (100 aa).

It belongs to the GatC family. In terms of assembly, heterotrimer of A, B and C subunits.

It catalyses the reaction L-glutamyl-tRNA(Gln) + L-glutamine + ATP + H2O = L-glutaminyl-tRNA(Gln) + L-glutamate + ADP + phosphate + H(+). The catalysed reaction is L-aspartyl-tRNA(Asn) + L-glutamine + ATP + H2O = L-asparaginyl-tRNA(Asn) + L-glutamate + ADP + phosphate + 2 H(+). Functionally, allows the formation of correctly charged Asn-tRNA(Asn) or Gln-tRNA(Gln) through the transamidation of misacylated Asp-tRNA(Asn) or Glu-tRNA(Gln) in organisms which lack either or both of asparaginyl-tRNA or glutaminyl-tRNA synthetases. The reaction takes place in the presence of glutamine and ATP through an activated phospho-Asp-tRNA(Asn) or phospho-Glu-tRNA(Gln). The protein is Aspartyl/glutamyl-tRNA(Asn/Gln) amidotransferase subunit C of Streptococcus uberis (strain ATCC BAA-854 / 0140J).